The chain runs to 1472 residues: Gag-Pol polyprotein (1472 aa).

G2 is lipidated: N-myristoyl glycine; by host. Positions 16 to 22 match the Nuclear export signal motif; the sequence is FEKIRLR. The Nuclear localization signal signature appears at 26 to 32; the sequence is KKKYQIK. 2 disordered regions span residues 115-135 and 215-234; these read EKAAKKKNETTAPPGGESRNY and DRTHRPPAGPLPAGQLRDPT. Y135 is subject to Phosphotyrosine; by host. 2 CCHC-type zinc fingers span residues 390 to 407 and 411 to 428; these read LKCFNCGKFGHMQRECKA and IKCFKCGKIGHMAKDCKN. The interval 454-500 is disordered; that stretch reads HSWSGTNSPPNGNSLRSSKEAPPAVCREGTAPERGERTDKETEGERS. Positions 456 to 469 are enriched in polar residues; it reads WSGTNSPPNGNSLR. The segment covering 483–499 has biased composition (basic and acidic residues); sequence TAPERGERTDKETEGER. A Peptidase A2 domain is found at 524–597; it reads VQALLDTGAD…TPINIIGRNI (74 aa). The active-site For protease activity; shared with dimeric partner is the D529. The region spanning 653–843 is the Reverse transcriptase domain; it reads EGKLSRIGGE…PPWEWMGYKL (191 aa). 3 residues coordinate Mg(2+): D719, D794, and D795. The segment at 836 to 844 is RT 'primer grip'; sequence WEWMGYKLH. Positions 1007 to 1023 match the Tryptophan repeat motif motif; the sequence is WDMWWQDYWQVSWIPEW. The 124-residue stretch at 1043 to 1166 folds into the RNase H type-1 domain; the sequence is IKGEDVYYVD…IDKLVSKGIR (124 aa). Residues D1052, E1087, D1107, and D1158 each contribute to the Mg(2+) site. An Integrase-type zinc finger spans residues 1172–1213; it reads DRIEEAQDDHAKYHNNWRSMVQEFGLPNIVAKEIVAACPKCQ. Zn(2+)-binding residues include H1181, H1185, C1209, and C1212. Residues 1223–1373 form the Integrase catalytic domain; it reads VDASIETWQM…SSAERLVNML (151 aa). Residues D1233 and D1285 each contribute to the Mg(2+) site. The segment at residues 1392–1439 is a DNA-binding region (integrase-type); that stretch reads FKVYYREGRDPVWKGPARLIWKGEGAVVIKEGEDIKVVPRRKAKIIKD. A disordered region spans residues 1440-1472; it reads YGERKTMDSEGSMEGVREANKQMEGDSDLQDQE. Over residues 1454-1463 the composition is skewed to basic and acidic residues; the sequence is GVREANKQME.

Homotrimer. Interacts with gp41 (via C-terminus). As to quaternary structure, homodimer. The active site consists of two apposed aspartic acid residues. In terms of assembly, heterodimer of p66 RT and p51 RT (RT p66/p51). Heterodimerization of RT is essential for DNA polymerase activity. Despite the sequence identities, p66 RT and p51 RT have distinct folding. Homotetramer; may further associate as a homohexadecamer. The cofactor is Mg(2+). Post-translationally, specific enzymatic cleavages by the viral protease yield mature proteins. The protease is released by autocatalytic cleavage. The polyprotein is cleaved during and after budding, this process is termed maturation. Proteolytic cleavage of p66 RT removes the RNase H domain to yield the p51 RT subunit. Capsid protein p24 is phosphorylated.

Its subcellular location is the virion. It localises to the host nucleus. The protein resides in the host cytoplasm. It is found in the host cell membrane. It catalyses the reaction Specific for a P1 residue that is hydrophobic, and P1' variable, but often Pro.. The catalysed reaction is Endohydrolysis of RNA in RNA/DNA hybrids. Three different cleavage modes: 1. sequence-specific internal cleavage of RNA. Human immunodeficiency virus type 1 and Moloney murine leukemia virus enzymes prefer to cleave the RNA strand one nucleotide away from the RNA-DNA junction. 2. RNA 5'-end directed cleavage 13-19 nucleotides from the RNA end. 3. DNA 3'-end directed cleavage 15-20 nucleotides away from the primer terminus.. The enzyme catalyses 3'-end directed exonucleolytic cleavage of viral RNA-DNA hybrid.. It carries out the reaction DNA(n) + a 2'-deoxyribonucleoside 5'-triphosphate = DNA(n+1) + diphosphate. With respect to regulation, the viral protease is inhibited by many synthetic protease inhibitors (PIs), such as amprenavir, atazanavir, indinavir, loprinavir, nelfinavir, ritonavir and saquinavir. RT can be inhibited either by nucleoside RT inhibitors (NRTIs) or by non nucleoside RT inhibitors (NNRTIs). NRTIs act as chain terminators, whereas NNRTIs inhibit DNA polymerization by binding a small hydrophobic pocket near the RT active site and inducing an allosteric change in this region. Classical NRTIs are abacavir, adefovir (PMEA), didanosine (ddI), lamivudine (3TC), stavudine (d4T), tenofovir (PMPA), zalcitabine (ddC), and zidovudine (AZT). Classical NNRTIs are atevirdine (BHAP U-87201E), delavirdine, efavirenz (DMP-266), emivirine (I-EBU), and nevirapine (BI-RG-587). The tritherapies used as a basic effective treatment of AIDS associate two NRTIs and one NNRTI. Use of protease inhibitors in tritherapy regimens permit more ambitious therapeutic strategies. Functionally, gag-Pol polyprotein and Gag polyprotein may regulate their own translation, by the binding genomic RNA in the 5'-UTR. At low concentration, Gag-Pol and Gag would promote translation, whereas at high concentration, the polyproteins encapsidate genomic RNA and then shut off translation. Its function is as follows. Matrix protein p17 has two main functions: in infected cell, it targets Gag and Gag-pol polyproteins to the plasma membrane via a multipartite membrane-binding signal, that includes its myristointegration complex. The myristoylation signal and the NLS exert conflicting influences its subcellular localization. The key regulation of these motifs might be phosphorylation of a portion of MA molecules on the C-terminal tyrosine at the time of virus maturation, by virion-associated cellular tyrosine kinase. Implicated in the release from host cell mediated by Vpu. In terms of biological role, capsid protein p24 forms the conical core that encapsulates the genomic RNA-nucleocapsid complex in the virion. The core is constituted by capsid protein hexamer subunits. The core is disassembled soon after virion entry. Interaction with host PPIA/CYPA protects the virus from restriction by host TRIM5-alpha and from an unknown antiviral activity in host cells. This capsid restriction by TRIM5 is one of the factors which restricts SIV to the simian species. Nucleocapsid protein p7 encapsulates and protects viral dimeric unspliced (genomic) RNA. Binds these RNAs through its zinc fingers. Facilitates rearangement of nucleic acid secondary structure during retrotranscription of genomic RNA. This capability is referred to as nucleic acid chaperone activity. Functionally, the aspartyl protease mediates proteolytic cleavages of Gag and Gag-Pol polyproteins during or shortly after the release of the virion from the plasma membrane. Cleavages take place as an ordered, step-wise cascade to yield mature proteins. This process is called maturation. Displays maximal activity during the budding process just prior to particle release from the cell. Also cleaves Nef and Vif, probably concomitantly with viral structural proteins on maturation of virus particles. Hydrolyzes host EIF4GI and PABP1 in order to shut off the capped cellular mRNA translation. The resulting inhibition of cellular protein synthesis serves to ensure maximal viral gene expression and to evade host immune response. Its function is as follows. Reverse transcriptase/ribonuclease H (RT) is a multifunctional enzyme that converts the viral dimeric RNA genome into dsDNA in the cytoplasm, shortly after virus entry into the cell. This enzyme displays a DNA polymerase activity that can copy either DNA or RNA templates, and a ribonuclease H (RNase H) activity that cleaves the RNA strand of RNA-DNA heteroduplexes in a partially processive 3' to 5' endonucleasic mode. Conversion of viral genomic RNA into dsDNA requires many steps. A tRNA binds to the primer-binding site (PBS) situated at the 5'-end of the viral RNA. RT uses the 3' end of the tRNA primer to perform a short round of RNA-dependent minus-strand DNA synthesis. The reading proceeds through the U5 region and ends after the repeated (R) region which is present at both ends of viral RNA. The portion of the RNA-DNA heteroduplex is digested by the RNase H, resulting in a ssDNA product attached to the tRNA primer. This ssDNA/tRNA hybridizes with the identical R region situated at the 3' end of viral RNA. This template exchange, known as minus-strand DNA strong stop transfer, can be either intra- or intermolecular. RT uses the 3' end of this newly synthesized short ssDNA to perform the RNA-dependent minus-strand DNA synthesis of the whole template. RNase H digests the RNA template except for two polypurine tracts (PPTs) situated at the 5'-end and near the center of the genome. It is not clear if both polymerase and RNase H activities are simultaneous. RNase H can probably proceed both in a polymerase-dependent (RNA cut into small fragments by the same RT performing DNA synthesis) and a polymerase-independent mode (cleavage of remaining RNA fragments by free RTs). Secondly, RT performs DNA-directed plus-strand DNA synthesis using the PPTs that have not been removed by RNase H as primers. PPTs and tRNA primers are then removed by RNase H. The 3' and 5' ssDNA PBS regions hybridize to form a circular dsDNA intermediate. Strand displacement synthesis by RT to the PBS and PPT ends produces a blunt ended, linear dsDNA copy of the viral genome that includes long terminal repeats (LTRs) at both ends. In terms of biological role, integrase catalyzes viral DNA integration into the host chromosome, by performing a series of DNA cutting and joining reactions. This enzyme activity takes place after virion entry into a cell and reverse transcription of the RNA genome in dsDNA. The first step in the integration process is 3' processing. This step requires a complex comprising the viral genome, matrix protein, Vpr and integrase. This complex is called the pre-integration complex (PIC). The integrase protein removes 2 nucleotides from each 3' end of the viral DNA, leaving recessed CA OH's at the 3' ends. In the second step, the PIC enters cell nucleus. This process is mediated through integrase and Vpr proteins, and allows the virus to infect a non dividing cell. This ability to enter the nucleus is specific of lentiviruses, other retroviruses cannot and rely on cell division to access cell chromosomes. In the third step, termed strand transfer, the integrase protein joins the previously processed 3' ends to the 5' ends of strands of target cellular DNA at the site of integration. The 5'-ends are produced by integrase-catalyzed staggered cuts, 5 bp apart. A Y-shaped, gapped, recombination intermediate results, with the 5'-ends of the viral DNA strands and the 3' ends of target DNA strands remaining unjoined, flanking a gap of 5 bp. The last step is viral DNA integration into host chromosome. This involves host DNA repair synthesis in which the 5 bp gaps between the unjoined strands are filled in and then ligated. Since this process occurs at both cuts flanking the SIV genome, a 5 bp duplication of host DNA is produced at the ends of SIV integration. Alternatively, Integrase may catalyze the excision of viral DNA just after strand transfer, this is termed disintegration. The polypeptide is Gag-Pol polyprotein (gag-pol) (Simian immunodeficiency virus agm.grivet (isolate AGM gr-1) (SIV-agm.gri)).